Consider the following 177-residue polypeptide: von Ebner gland protein 1 (177 aa).

A signal peptide spans 1 to 18 (MKALLLTFGLSLLAALQA). A disulfide bridge links cysteine 80 with cysteine 172.

Belongs to the calycin superfamily. Lipocalin family. In terms of assembly, homodimer.

Its subcellular location is the secreted. Its function is as follows. Could play a role in taste reception. Could be necessary for the concentration and delivery of sapid molecules in the gustatory system. This is von Ebner gland protein 1 (Vegp1) from Rattus norvegicus (Rat).